The following is a 486-amino-acid chain: NADH-quinone oxidoreductase subunit N (486 aa).

13 consecutive transmembrane segments (helical) span residues isoleucine 5–leucine 25, leucine 41–phenylalanine 61, glycine 77–methionine 97, serine 118–leucine 138, tyrosine 165–glycine 185, phenylalanine 209–phenylalanine 229, threonine 245–alanine 265, leucine 275–isoleucine 295, isoleucine 304–valine 324, valine 335–methionine 355, alanine 380–phenylalanine 400, glycine 413–leucine 433, and valine 458–phenylalanine 478.

It belongs to the complex I subunit 2 family. As to quaternary structure, NDH-1 is composed of 14 different subunits. Subunits NuoA, H, J, K, L, M, N constitute the membrane sector of the complex.

Its subcellular location is the cell inner membrane. It carries out the reaction a quinone + NADH + 5 H(+)(in) = a quinol + NAD(+) + 4 H(+)(out). Its function is as follows. NDH-1 shuttles electrons from NADH, via FMN and iron-sulfur (Fe-S) centers, to quinones in the respiratory chain. The immediate electron acceptor for the enzyme in this species is believed to be ubiquinone. Couples the redox reaction to proton translocation (for every two electrons transferred, four hydrogen ions are translocated across the cytoplasmic membrane), and thus conserves the redox energy in a proton gradient. This is NADH-quinone oxidoreductase subunit N from Bdellovibrio bacteriovorus (strain ATCC 15356 / DSM 50701 / NCIMB 9529 / HD100).